The primary structure comprises 89 residues: Small ribosomal subunit protein uS15 (89 aa).

It belongs to the universal ribosomal protein uS15 family. In terms of assembly, part of the 30S ribosomal subunit. Forms a bridge to the 50S subunit in the 70S ribosome, contacting the 23S rRNA.

In terms of biological role, one of the primary rRNA binding proteins, it binds directly to 16S rRNA where it helps nucleate assembly of the platform of the 30S subunit by binding and bridging several RNA helices of the 16S rRNA. Its function is as follows. Forms an intersubunit bridge (bridge B4) with the 23S rRNA of the 50S subunit in the ribosome. This chain is Small ribosomal subunit protein uS15, found in Thermosynechococcus vestitus (strain NIES-2133 / IAM M-273 / BP-1).